The sequence spans 305 residues: Uridylate cyclase (305 aa).

Positions 58 and 102 each coordinate Mn(2+).

Belongs to the adenylyl cyclase class-4/guanylyl cyclase family. Pyrimidine cyclase subfamily. In terms of assembly, homodimer. It depends on Mn(2+) as a cofactor.

The protein localises to the cytoplasm. It catalyses the reaction GTP = 3',5'-cyclic GMP + diphosphate. It carries out the reaction UTP = 3',5'-cyclic UMP + diphosphate. In terms of biological role, pycsar (pyrimidine cyclase system for antiphage resistance) provides immunity against bacteriophage. The pyrimidine cyclase (PycC) synthesizes cyclic nucleotides in response to infection; these serve as specific second messenger signals. The signals activate the adjacent effector, leading to bacterial cell death and abortive phage infection. A clade D Pycsar system. Its function is as follows. The pyrimidine cyclase gene of a two-gene Pycsar system, generates cyclic UMP (cUMP) from UTP as well as cGMP from GTP to a lesser extent, has little to no activity on ATP or CTP. Expression of this and adjacent effector MePycTM (AC A0A1C5G2D0) probably confers resistance to bacteriophage. The genes are probably only expressed in response to bacteriophage infection. This chain is Uridylate cyclase, found in Micromonospora echinofusca.